The following is a 313-amino-acid chain: Biotin synthase (313 aa).

The Radical SAM core domain maps to 37–263 (YYGKKVKLNM…INPTKEIRIA (227 aa)). 3 residues coordinate [4Fe-4S] cluster: Cys-55, Cys-59, and Cys-62. 4 residues coordinate [2Fe-2S] cluster: Cys-98, Cys-131, Cys-191, and Arg-261.

The protein belongs to the radical SAM superfamily. Biotin synthase family. Homodimer. It depends on [4Fe-4S] cluster as a cofactor. The cofactor is [2Fe-2S] cluster.

The catalysed reaction is (4R,5S)-dethiobiotin + (sulfur carrier)-SH + 2 reduced [2Fe-2S]-[ferredoxin] + 2 S-adenosyl-L-methionine = (sulfur carrier)-H + biotin + 2 5'-deoxyadenosine + 2 L-methionine + 2 oxidized [2Fe-2S]-[ferredoxin]. The protein operates within cofactor biosynthesis; biotin biosynthesis; biotin from 7,8-diaminononanoate: step 2/2. Catalyzes the conversion of dethiobiotin (DTB) to biotin by the insertion of a sulfur atom into dethiobiotin via a radical-based mechanism. This is Biotin synthase from Staphylococcus epidermidis (strain ATCC 12228 / FDA PCI 1200).